The following is a 368-amino-acid chain: MEFLERTYLVNDQATKMYAFTSDRERGQKPVNKDQCPGDGPERPEAGAIYHCHNSFKATGNRSSKQVHAKWRLCAASAICFFFMVAEVVGGHVAGSLAVLTDAAHLLIDLTSFLLSLFSLWLSSRPPSKRLTFGWYRAEILGALLSVLCIWVVTGVLVYLACERLLYPDYQIQAGIMITVSGCAVAANIVLTLILHQRHLGHNHKDAQANASVRAAFVHALGDVFQSTSVLISALIIYFKPDYKMADPVCTFISSVLALASTVMILKDFSILLMEGVPKGLSYNSVKELLLTVDGVISVHNLHIWSLTVNQVILSVHVATAASQDSQSVRTGIACALSSSFDLHSLTIQIESAADQDPSCLLCEDPQD.

The Cytoplasmic segment spans residues methionine 1–alanine 78. Positions 51, 52, and 53 each coordinate Zn(2+). The HCH Motif; seals regulatory zinc-binding pocket signature appears at histidine 51–histidine 53. Residues isoleucine 79–valine 99 form a helical membrane-spanning segment. At leucine 100–aspartate 102 the chain is on the lumenal, vesicle side. A helical transmembrane segment spans residues alanine 103–serine 123. Positions 105 and 109 each coordinate Zn(2+). Residues serine 124 to glutamate 139 lie on the Cytoplasmic side of the membrane. A helical transmembrane segment spans residues isoleucine 140 to leucine 160. Residues alanine 161 to alanine 174 are Lumenal, vesicle-facing. The chain crosses the membrane as a helical span at residues glycine 175–leucine 195. Over histidine 196–alanine 216 the chain is Cytoplasmic. Residues phenylalanine 217–isoleucine 237 form a helical membrane-spanning segment. Zn(2+) contacts are provided by histidine 219 and aspartate 223. The Lumenal, vesicle portion of the chain corresponds to tyrosine 238–methionine 245. Residues alanine 246–leucine 266 traverse the membrane as a helical segment. The Cytoplasmic portion of the chain corresponds to lysine 267–aspartate 368. Residues histidine 300, histidine 317, histidine 344, glutamate 351, cysteine 360, and cysteine 363 each coordinate Zn(2+).

It belongs to the cation diffusion facilitator (CDF) transporter (TC 2.A.4) family. SLC30A subfamily. In terms of assembly, homodimer. As to expression, expressed in endocrine pancreatic islet alpha and beta cells. May be more abundant in beta cells than in alpha cells. Expressed in cubical epithelium lining thyroid follicles (at protein level). In the adrenal gland, detected in the cortex, but not in the medulla (at protein level).

The protein resides in the cytoplasmic vesicle. It is found in the secretory vesicle membrane. Its subcellular location is the cell membrane. It carries out the reaction Zn(2+)(in) + 2 H(+)(out) = Zn(2+)(out) + 2 H(+)(in). Proton-coupled zinc ion antiporter mediating the entry of zinc into the lumen of pancreatic beta cell secretory granules, thereby regulating insulin secretion. This is Proton-coupled zinc antiporter SLC30A8 from Rattus norvegicus (Rat).